The primary structure comprises 281 residues: ATP phosphoribosyltransferase (281 aa).

It belongs to the ATP phosphoribosyltransferase family. Long subfamily. Equilibrium between an active dimeric form, an inactive hexameric form and higher aggregates. Interconversion between the various forms is largely reversible and is influenced by the natural substrates and inhibitors of the enzyme. The cofactor is Mg(2+).

It is found in the cytoplasm. The enzyme catalyses 1-(5-phospho-beta-D-ribosyl)-ATP + diphosphate = 5-phospho-alpha-D-ribose 1-diphosphate + ATP. The protein operates within amino-acid biosynthesis; L-histidine biosynthesis; L-histidine from 5-phospho-alpha-D-ribose 1-diphosphate: step 1/9. Feedback inhibited by histidine. Functionally, catalyzes the condensation of ATP and 5-phosphoribose 1-diphosphate to form N'-(5'-phosphoribosyl)-ATP (PR-ATP). Has a crucial role in the pathway because the rate of histidine biosynthesis seems to be controlled primarily by regulation of HisG enzymatic activity. This chain is ATP phosphoribosyltransferase, found in Mycolicibacterium gilvum (strain PYR-GCK) (Mycobacterium gilvum (strain PYR-GCK)).